The following is a 349-amino-acid chain: Phosphoribosylformylglycinamidine cyclo-ligase (349 aa).

It belongs to the AIR synthase family.

Its subcellular location is the cytoplasm. The catalysed reaction is 2-formamido-N(1)-(5-O-phospho-beta-D-ribosyl)acetamidine + ATP = 5-amino-1-(5-phospho-beta-D-ribosyl)imidazole + ADP + phosphate + H(+). Its pathway is purine metabolism; IMP biosynthesis via de novo pathway; 5-amino-1-(5-phospho-D-ribosyl)imidazole from N(2)-formyl-N(1)-(5-phospho-D-ribosyl)glycinamide: step 2/2. This chain is Phosphoribosylformylglycinamidine cyclo-ligase, found in Methanococcus maripaludis (strain C5 / ATCC BAA-1333).